The sequence spans 283 residues: Thymidylate synthase (283 aa).

Residue arginine 22 coordinates dUMP. The active-site Nucleophile is cysteine 160. DUMP contacts are provided by residues 180 to 183 (RSCD), asparagine 191, and 221 to 223 (HIY). A (6R)-5,10-methylene-5,6,7,8-tetrahydrofolate-binding site is contributed by aspartate 183. Serine 282 is a (6R)-5,10-methylene-5,6,7,8-tetrahydrofolate binding site.

The protein belongs to the thymidylate synthase family. Bacterial-type ThyA subfamily. In terms of assembly, homodimer.

The protein resides in the cytoplasm. It catalyses the reaction dUMP + (6R)-5,10-methylene-5,6,7,8-tetrahydrofolate = 7,8-dihydrofolate + dTMP. Its pathway is pyrimidine metabolism; dTTP biosynthesis. Functionally, catalyzes the reductive methylation of 2'-deoxyuridine-5'-monophosphate (dUMP) to 2'-deoxythymidine-5'-monophosphate (dTMP) while utilizing 5,10-methylenetetrahydrofolate (mTHF) as the methyl donor and reductant in the reaction, yielding dihydrofolate (DHF) as a by-product. This enzymatic reaction provides an intracellular de novo source of dTMP, an essential precursor for DNA biosynthesis. The protein is Thymidylate synthase of Psychromonas ingrahamii (strain DSM 17664 / CCUG 51855 / 37).